We begin with the raw amino-acid sequence, 195 residues long: Protein GrpE (195 aa).

The tract at residues 1–60 (MAKDEEKNSQASAAPNEGEVKAKQEQTSAKEPAAKAGETEKVADLQKQVEELTKQLDDQK) is disordered. Over residues 37 to 60 (GETEKVADLQKQVEELTKQLDDQK) the composition is skewed to basic and acidic residues.

It belongs to the GrpE family. In terms of assembly, homodimer.

It is found in the cytoplasm. Participates actively in the response to hyperosmotic and heat shock by preventing the aggregation of stress-denatured proteins, in association with DnaK and GrpE. It is the nucleotide exchange factor for DnaK and may function as a thermosensor. Unfolded proteins bind initially to DnaJ; upon interaction with the DnaJ-bound protein, DnaK hydrolyzes its bound ATP, resulting in the formation of a stable complex. GrpE releases ADP from DnaK; ATP binding to DnaK triggers the release of the substrate protein, thus completing the reaction cycle. Several rounds of ATP-dependent interactions between DnaJ, DnaK and GrpE are required for fully efficient folding. The polypeptide is Protein GrpE (Limosilactobacillus fermentum (strain NBRC 3956 / LMG 18251) (Lactobacillus fermentum)).